A 140-amino-acid chain; its full sequence is Small ribosomal subunit protein uS12 (140 aa).

Position 102 is a 3-methylthioaspartic acid (Asp102).

This sequence belongs to the universal ribosomal protein uS12 family. In terms of assembly, part of the 30S ribosomal subunit. Contacts proteins S8 and S17. May interact with IF1 in the 30S initiation complex.

Functionally, with S4 and S5 plays an important role in translational accuracy. Interacts with and stabilizes bases of the 16S rRNA that are involved in tRNA selection in the A site and with the mRNA backbone. Located at the interface of the 30S and 50S subunits, it traverses the body of the 30S subunit contacting proteins on the other side and probably holding the rRNA structure together. The combined cluster of proteins S8, S12 and S17 appears to hold together the shoulder and platform of the 30S subunit. The chain is Small ribosomal subunit protein uS12 from Geobacillus stearothermophilus (Bacillus stearothermophilus).